The primary structure comprises 211 residues: MAECVVHDWQGKEAGKASLELKVSKETTAVDLMHRAVLRQQAHSRQGTASTLTRAEVRGGGRKPYKQKGTGRARQGTIRTPLRPGGGIIFGPKPRTYNLAMNRKERRLALRTALMARIEDVIVVKDFGNSLKVPKTREISDALIRLGLAADAKVLIILSTPSEIIRRSVRNLEKVKLIAADQLNVFDLLHANSLVLSEEALAKIQEVYGDD.

The span at 41–53 shows a compositional bias: polar residues; it reads QAHSRQGTASTLT. The tract at residues 41-78 is disordered; it reads QAHSRQGTASTLTRAEVRGGGRKPYKQKGTGRARQGTI. Positions 60-71 are enriched in basic residues; that stretch reads GGRKPYKQKGTG.

Belongs to the universal ribosomal protein uL4 family. In terms of assembly, part of the 50S ribosomal subunit.

One of the primary rRNA binding proteins, this protein initially binds near the 5'-end of the 23S rRNA. It is important during the early stages of 50S assembly. It makes multiple contacts with different domains of the 23S rRNA in the assembled 50S subunit and ribosome. Its function is as follows. Forms part of the polypeptide exit tunnel. This is Large ribosomal subunit protein uL4 from Prochlorococcus marinus (strain MIT 9313).